Here is a 227-residue protein sequence, read N- to C-terminus: Ribosomal RNA large subunit methyltransferase E (227 aa).

The S-adenosyl-L-methionine site is built by glycine 78, tryptophan 80, aspartate 103, aspartate 119, and aspartate 143. The active-site Proton acceptor is the lysine 183.

This sequence belongs to the class I-like SAM-binding methyltransferase superfamily. RNA methyltransferase RlmE family.

The protein localises to the cytoplasm. It carries out the reaction uridine(2552) in 23S rRNA + S-adenosyl-L-methionine = 2'-O-methyluridine(2552) in 23S rRNA + S-adenosyl-L-homocysteine + H(+). Its function is as follows. Specifically methylates the uridine in position 2552 of 23S rRNA at the 2'-O position of the ribose in the fully assembled 50S ribosomal subunit. The protein is Ribosomal RNA large subunit methyltransferase E of Rickettsia canadensis (strain McKiel).